A 152-amino-acid polypeptide reads, in one-letter code: Deoxyuridine 5'-triphosphate nucleotidohydrolase (152 aa).

Substrate-binding positions include arginine 72–glycine 74, asparagine 85, and threonine 89–aspartate 91.

This sequence belongs to the dUTPase family. The cofactor is Mg(2+).

It carries out the reaction dUTP + H2O = dUMP + diphosphate + H(+). It functions in the pathway pyrimidine metabolism; dUMP biosynthesis; dUMP from dCTP (dUTP route): step 2/2. This enzyme is involved in nucleotide metabolism: it produces dUMP, the immediate precursor of thymidine nucleotides and it decreases the intracellular concentration of dUTP so that uracil cannot be incorporated into DNA. This is Deoxyuridine 5'-triphosphate nucleotidohydrolase from Rhodopseudomonas palustris (strain BisB18).